A 113-amino-acid polypeptide reads, in one-letter code: Large ribosomal subunit protein uL18 (113 aa).

The protein belongs to the universal ribosomal protein uL18 family. In terms of assembly, part of the 50S ribosomal subunit; part of the 5S rRNA/L5/L18/L25 subcomplex. Contacts the 5S and 23S rRNAs.

Its function is as follows. This is one of the proteins that bind and probably mediate the attachment of the 5S RNA into the large ribosomal subunit, where it forms part of the central protuberance. The polypeptide is Large ribosomal subunit protein uL18 (Phocaeicola vulgatus (strain ATCC 8482 / DSM 1447 / JCM 5826 / CCUG 4940 / NBRC 14291 / NCTC 11154) (Bacteroides vulgatus)).